Here is a 192-residue protein sequence, read N- to C-terminus: MSVITSNPWLMVLAIFIINVAYVTCLTMRTILTLKGYRYVAAIVSFLEVLVYVVGLGMVMSSLDQIQNVFAYAFGFSIGIIVGMKIEEKLALGYTVVNVTSSEYELDLPRQLRDLGYGVTHNTAYGRDGKRLILQILTPRRFEFKLIDTIKQIDEKAFIVAYEPRQIHGGFWAKGVRSKKLKQYDTDEVESI.

A run of 3 helical transmembrane segments spans residues 8-28, 40-60, and 66-86; these read PWLMVLAIFIINVAYVTCLTM, VAAIVSFLEVLVYVVGLGMVM, and IQNVFAYAFGFSIGIIVGMKI.

It belongs to the UPF0316 family.

It localises to the cell membrane. This chain is UPF0316 protein SSP0880, found in Staphylococcus saprophyticus subsp. saprophyticus (strain ATCC 15305 / DSM 20229 / NCIMB 8711 / NCTC 7292 / S-41).